We begin with the raw amino-acid sequence, 436 residues long: Testis-expressed protein 44 (436 aa).

Acidic residues-rich tracts occupy residues 1–10 (MTTEPLEDPE) and 45–54 (LPDEVPPEDI). Disordered stretches follow at residues 1-142 (MTTE…LTSL) and 165-307 (AENN…SLYG). Composition is skewed to polar residues over residues 81–103 (ASMQIATSMGQNKDRASMQTDTS) and 167–195 (NNRTSRSRTVSPSDSQTQEKTSGKSTVSE). Positions 234–247 (EPTKSADQEAEDFK) are enriched in basic and acidic residues. Residues 273–289 (QAPPSPNSPADSPPPSP) show a composition bias toward pro residues. Serine 375 is modified (phosphoserine).

It localises to the cytoplasm. This Rattus norvegicus (Rat) protein is Testis-expressed protein 44 (Tex44).